Reading from the N-terminus, the 2060-residue chain is Fatty acid synthase subunit beta (2060 aa).

Residues M1–P32 are disordered. The span at P18–P32 shows a compositional bias: low complexity. Residues V182–H543 are acetyltransferase (AT) domain. S301 (for acetyltransferase activity) is an active-site residue. Positions T600–D845 are enoyl reductase (ER) domain. The dehydratase (DH) domain stretch occupies residues D1157–M1640. Positions F1549–A1661 constitute a MaoC-like domain. The malonyl/palmitoyl transferase (MT/PT) domain stretch occupies residues L1679 to S2043. The active-site For malonyltransferase activity is the S1824.

It belongs to the fungal fatty acid synthetase subunit beta family. In terms of assembly, [Alpha(6)beta(6)] hexamers of two multifunctional subunits (alpha and beta).

The catalysed reaction is acetyl-CoA + n malonyl-CoA + 2n NADPH + 4n H(+) = a long-chain-acyl-CoA + n CoA + n CO2 + 2n NADP(+).. The enzyme catalyses holo-[ACP] + acetyl-CoA = acetyl-[ACP] + CoA. It catalyses the reaction holo-[ACP] + malonyl-CoA = malonyl-[ACP] + CoA. It carries out the reaction a (3R)-hydroxyacyl-[ACP] = a (2E)-enoyl-[ACP] + H2O. The catalysed reaction is a 2,3-saturated acyl-[ACP] + NAD(+) = a (2E)-enoyl-[ACP] + NADH + H(+). The enzyme catalyses (9Z)-octadecenoyl-[ACP] + H2O = (9Z)-octadecenoate + holo-[ACP] + H(+). It participates in mycotoxin biosynthesis. Its function is as follows. Fatty acid synthase subunit beta; part of the gene cluster that mediates the biosynthesis of gramillins A and B, bicyclic lipopeptides that induce cell death in maize leaves but not in wheat leaves. The nonribosomal peptide synthetase GRA1 incorporates respectively a glutamic adic (Glu), a leucine (Leu), a serine (Ser), a hydroxyglutamine (HOGln), a 2-amino decanoic acid, and 2 cysteins (CysB and CysA). The biosynthesis of 2-amino decanoic acid incorporated in gramillins could be initiated by a fatty acid synthase composed of the alpha and beta subunits FGSG_00036 and FGSG_11656. The cytochrome P450 monooxygenase FGSG_15680 could hydroxylate the fatty acid chain. Subsequent oxidation to the ketone by the oxidoreductase FGSG_00048 and transamination by aminotransferase FGSG_00049 could form 2-amino-decanoic acid. On the other hand, FGSG_15680 could also be responsible for the HO-modified glutamine at the gamma-position. Whether hydroxylation occurs on the fully assembled product or on the Gln residue prior to assembly into the gramillins requires further proof. The thioredoxin FGSG_00043 could also be required for the disulfide-bond formation between CysA and CysB. The specific involvement of the remaining proteins from the cluster is more difficult to discern, but could have broader regulatory (FGSG_00040 and FGSG_11657) or enzymatic functions (FGSG_00044 and FGSG_00045). The final C-domain of GRA1 does not possess the expected sequence of a termination CT domain, often implicated in macrocyclization and release of a cyclopeptidein fungal NRPs; and the thioesterase FGSG_00047 may act in concert with the terminal C-domain of GRA1 to catalyze the formation of the macrocyclic anhydride and release of the products. The chain is Fatty acid synthase subunit beta from Gibberella zeae (strain ATCC MYA-4620 / CBS 123657 / FGSC 9075 / NRRL 31084 / PH-1) (Wheat head blight fungus).